A 20-amino-acid chain; its full sequence is Unknown protein NF042 from 2D-PAGE (20 aa).

The chain is Unknown protein NF042 from 2D-PAGE from Naegleria fowleri (Brain eating amoeba).